Consider the following 252-residue polypeptide: Imidazole glycerol phosphate synthase subunit HisF (252 aa).

Catalysis depends on residues Asp-11 and Asp-130.

Belongs to the HisA/HisF family. As to quaternary structure, heterodimer of HisH and HisF.

Its subcellular location is the cytoplasm. The enzyme catalyses 5-[(5-phospho-1-deoxy-D-ribulos-1-ylimino)methylamino]-1-(5-phospho-beta-D-ribosyl)imidazole-4-carboxamide + L-glutamine = D-erythro-1-(imidazol-4-yl)glycerol 3-phosphate + 5-amino-1-(5-phospho-beta-D-ribosyl)imidazole-4-carboxamide + L-glutamate + H(+). It functions in the pathway amino-acid biosynthesis; L-histidine biosynthesis; L-histidine from 5-phospho-alpha-D-ribose 1-diphosphate: step 5/9. IGPS catalyzes the conversion of PRFAR and glutamine to IGP, AICAR and glutamate. The HisF subunit catalyzes the cyclization activity that produces IGP and AICAR from PRFAR using the ammonia provided by the HisH subunit. This is Imidazole glycerol phosphate synthase subunit HisF from Sulfurihydrogenibium sp. (strain YO3AOP1).